Consider the following 257-residue polypeptide: Phosphonates import ATP-binding protein PhnC (257 aa).

One can recognise an ABC transporter domain in the interval 4 to 248; that stretch reads IKFKNVSKVY…VFSKIYGRTI (245 aa). An ATP-binding site is contributed by 37-44; it reads GLSGAGKS.

It belongs to the ABC transporter superfamily. Phosphonates importer (TC 3.A.1.9.1) family. As to quaternary structure, the complex is composed of two ATP-binding proteins (PhnC), two transmembrane proteins (PhnE) and a solute-binding protein (PhnD).

The protein resides in the cell membrane. The enzyme catalyses phosphonate(out) + ATP + H2O = phosphonate(in) + ADP + phosphate + H(+). Part of the ABC transporter complex PhnCDE involved in phosphonates import. Responsible for energy coupling to the transport system. The polypeptide is Phosphonates import ATP-binding protein PhnC (Staphylococcus aureus (strain MRSA252)).